The chain runs to 483 residues: UDP-N-acetylmuramate--L-alanine ligase (483 aa).

Residue 112–118 participates in ATP binding; that stretch reads GTHGKTT.

Belongs to the MurCDEF family.

It localises to the cytoplasm. It carries out the reaction UDP-N-acetyl-alpha-D-muramate + L-alanine + ATP = UDP-N-acetyl-alpha-D-muramoyl-L-alanine + ADP + phosphate + H(+). The protein operates within cell wall biogenesis; peptidoglycan biosynthesis. In terms of biological role, cell wall formation. The sequence is that of UDP-N-acetylmuramate--L-alanine ligase from Ralstonia pickettii (strain 12J).